A 173-amino-acid chain; its full sequence is MEWSLPVDLQEEILSRVPAKSLARWKSTPKQWKGPISIEFLHLLRSTLKFPLLNLHLKSKSIYVTSFTAMVFCYAPPSTKDSRFGIHVQGKPSGLNLDTGTVSPTFRLSNKVVVCCKWRSDSINTIYFVGENKHVQVDQRRGDLTLGQSCSFLMNYVPSFVQIQQGTLLAPRT.

Residues 1–46 (MEWSLPVDLQEEILSRVPAKSLARWKSTPKQWKGPISIEFLHLLRS) form the F-box domain.

This chain is Probable F-box protein At1g27490, found in Arabidopsis thaliana (Mouse-ear cress).